The following is a 380-amino-acid chain: MANLRKTHPLLKIANDALVDLPAPSNISVWWNFGSLLGLCLATQILTGLFLAMHYTSDISTAFSSVCHICRDVSYGWLIRNIHANGASFFFICIYMHIARGLYYGSYLYKETWNIGVVLLLLTMMTAFVGYVLPWGQMSFWGATVITNLLSAVPYVGGALVQWIWGGFSVDNATLTRFFAFHFLFPFVIAAATVLHLLFLHETGSNNPAGINSDADKISFHPYFSYKDLLGFVAMLLGLTSLALFAPNLLGDPDNFTPANPLVTPPHIKPEWYFLFAYAILRSIPNKLGGVLALLFSILVLMVVPILHTSKQRGLTFRPLTQFLFWALVADMLILTWIGGMPVEHPFIIIGQVASVIYFTIFLVLSPLAGWAEIKALQWA.

Transmembrane regions (helical) follow at residues 33 to 53 (FGSL…FLAM), 77 to 98 (WLIR…YMHI), 113 to 133 (WNIG…GYVL), and 178 to 198 (FFAF…LHLL). Heme b is bound by residues histidine 83 and histidine 97. Positions 182 and 196 each coordinate heme b. Histidine 201 serves as a coordination point for a ubiquinone. Transmembrane regions (helical) follow at residues 226-246 (YKDL…ALFA), 288-308 (LGGV…PILH), 320-340 (LTQF…WIGG), and 347-367 (FIII…VLSP).

It belongs to the cytochrome b family. The cytochrome bc1 complex contains 3 respiratory subunits (MT-CYB, CYC1 and UQCRFS1), 2 core proteins (UQCRC1 and UQCRC2) and probably 6 low-molecular weight proteins. The cofactor is heme b.

It localises to the mitochondrion inner membrane. Component of the ubiquinol-cytochrome c reductase complex (complex III or cytochrome b-c1 complex) that is part of the mitochondrial respiratory chain. The b-c1 complex mediates electron transfer from ubiquinol to cytochrome c. Contributes to the generation of a proton gradient across the mitochondrial membrane that is then used for ATP synthesis. This chain is Cytochrome b (mt-cyb), found in Oncorhynchus mykiss (Rainbow trout).